The primary structure comprises 96 residues: ATP synthase subunit e, mitochondrial (96 aa).

An N-acetylserine modification is found at Ser-2.

This sequence belongs to the ATPase e subunit family. In terms of assembly, F-type ATPases have 2 components, CF(1) - the catalytic core - and CF(0) - the membrane proton channel. In yeast, the dimeric form of ATP synthase consists of 17 polypeptides: alpha, beta, gamma, delta, epsilon, 4 (B), 5 (OSCP), 6 (A), 8, 9 (C), d, E (Tim11), f, g, h, i/j and k.

It is found in the mitochondrion. It localises to the mitochondrion inner membrane. In terms of biological role, mitochondrial membrane ATP synthase (F(1)F(0) ATP synthase or Complex V) produces ATP from ADP in the presence of a proton gradient across the membrane which is generated by electron transport complexes of the respiratory chain. F-type ATPases consist of two structural domains, F(1) - containing the extramembraneous catalytic core, and F(0) - containing the membrane proton channel, linked together by a central stalk and a peripheral stalk. During catalysis, ATP synthesis in the catalytic domain of F(1) is coupled via a rotary mechanism of the central stalk subunits to proton translocation. Part of the complex F(0) domain. Minor subunit located with subunit a in the membrane. This is ATP synthase subunit e, mitochondrial (TIM11) from Saccharomyces cerevisiae (strain ATCC 204508 / S288c) (Baker's yeast).